Here is a 294-residue protein sequence, read N- to C-terminus: tRNA dimethylallyltransferase (294 aa).

11–18 contacts ATP; that stretch reads GPTAVGKT. 13–18 lines the substrate pocket; it reads TAVGKT. The interaction with substrate tRNA stretch occupies residues 36–39; sequence DSQQ.

This sequence belongs to the IPP transferase family. In terms of assembly, monomer. The cofactor is Mg(2+).

The catalysed reaction is adenosine(37) in tRNA + dimethylallyl diphosphate = N(6)-dimethylallyladenosine(37) in tRNA + diphosphate. In terms of biological role, catalyzes the transfer of a dimethylallyl group onto the adenine at position 37 in tRNAs that read codons beginning with uridine, leading to the formation of N6-(dimethylallyl)adenosine (i(6)A). The sequence is that of tRNA dimethylallyltransferase from Lactococcus lactis subsp. lactis (strain IL1403) (Streptococcus lactis).